Here is a 619-residue protein sequence, read N- to C-terminus: DNA polymerase II small subunit (619 aa).

The disordered stretch occupies residues 78-122 (EEAEKTVESQETRASELEEGGVSQVSSGELQELKEESPEISTTEE). The segment covering 79-93 (EAEKTVESQETRASE) has biased composition (basic and acidic residues).

The protein belongs to the DNA polymerase delta/II small subunit family. As to quaternary structure, heterodimer of a large subunit and a small subunit.

It catalyses the reaction DNA(n) + a 2'-deoxyribonucleoside 5'-triphosphate = DNA(n+1) + diphosphate. The catalysed reaction is Exonucleolytic cleavage in the 3'- to 5'-direction to yield nucleoside 5'-phosphates.. Functionally, possesses two activities: a DNA synthesis (polymerase) and an exonucleolytic activity that degrades single-stranded DNA in the 3' to 5' direction. Has a template-primer preference which is characteristic of a replicative DNA polymerase. This Pyrococcus abyssi (strain GE5 / Orsay) protein is DNA polymerase II small subunit (polB).